The sequence spans 494 residues: Adenosylhomocysteinase (494 aa).

3 residues coordinate substrate: T72, D155, and E217. 218 to 220 contributes to the NAD(+) binding site; it reads TTT. Substrate is bound by residues K247 and D251. Residues N252, 281 to 286, E304, N339, 360 to 362, and N408 contribute to the NAD(+) site; these read GYGDVG and IGH.

The protein belongs to the adenosylhomocysteinase family. It depends on NAD(+) as a cofactor.

It is found in the cytoplasm. The catalysed reaction is S-adenosyl-L-homocysteine + H2O = L-homocysteine + adenosine. It participates in amino-acid biosynthesis; L-homocysteine biosynthesis; L-homocysteine from S-adenosyl-L-homocysteine: step 1/1. Its function is as follows. May play a key role in the regulation of the intracellular concentration of adenosylhomocysteine. In Nocardia farcinica (strain IFM 10152), this protein is Adenosylhomocysteinase.